A 64-amino-acid polypeptide reads, in one-letter code: Large ribosomal subunit protein bL28 (64 aa).

The interval 1 to 26 is disordered; sequence MARRDQLTGKGPLSGNTRSHAMNHSK.

Belongs to the bacterial ribosomal protein bL28 family.

This chain is Large ribosomal subunit protein bL28, found in Ureaplasma urealyticum serovar 10 (strain ATCC 33699 / Western).